The following is a 411-amino-acid chain: KIN17-like protein (411 aa).

The C2H2-type zinc-finger motif lies at 28–50 (CQMCQKQCRDENGFKCHCMSESH). The interval 51–160 (QRQMQVFGQN…KERLKNKRVK (110 aa)) is winged helix-turn-helix (wHTH). Positions 147-183 (ETLFKERLKNKRVKSDLAEEEKQEREIQRQIERAAEK) form a coiled coil. 2 disordered regions span residues 182 to 211 (EKLN…KKDE) and 232 to 286 (VATG…EEEK). The span at 253-286 (KVERGEKRKRSGDSGRSEKERRSALDELMKEEEK) shows a compositional bias: basic and acidic residues. A Nuclear localization signal (NLS) motif is present at residues 259–262 (KRKR). Residues 265–294 (DSGRSEKERRSALDELMKEEEKKKERMNRK) are a coiled coil. Residues 301 to 352 (GIIVKVMSKALAEKGYYKQKGVVKKVIDNYVGEIKMLDSKHVLRVDQKELET) are C-terminal subdomain A. Residues 358-409 (GGMVKIVNGAYRGSNARLLGVDTEKFCAKVQIEKGVYDGRVIKSIEYEDICK) are C-terminal subdomain B.

Belongs to the KIN17 family. Interacts with SPL7. As to expression, expressed in root vasculature, lateral roots, cotyledons, rosette leaves, cauline leaves, stems, sepals, style of pistils, mature pollen grains and siliques.

It is found in the nucleus speckle. Functionally, promotes the copper deficiency response by direct interaction with SPL7. Acts with SPL7 in a common pathway to promote copper-responsive genes and alleviate oxidative stress during copper-limiting periods. May promote SPL7 function when copper is limiting. Participates in the control of general plant growth and development, and in the response to counteract the negative effects of UV radiation. This chain is KIN17-like protein, found in Arabidopsis thaliana (Mouse-ear cress).